We begin with the raw amino-acid sequence, 297 residues long: Phosphatidylglycerol--prolipoprotein diacylglyceryl transferase (297 aa).

4 helical membrane-spanning segments follow: residues 20 to 40 (FITI…GLFV), 57 to 77 (EILP…YVIF), 105 to 125 (AVWE…ISII), and 133 to 153 (INLK…QSIG). An a 1,2-diacyl-sn-glycero-3-phospho-(1'-sn-glycerol)-binding site is contributed by R154. 3 helical membrane-spanning segments follow: residues 193-213 (PTFL…IIIF), 225-245 (GFIS…IEGL), and 266-286 (AQFI…FLRL).

Belongs to the Lgt family.

It localises to the cell inner membrane. It carries out the reaction L-cysteinyl-[prolipoprotein] + a 1,2-diacyl-sn-glycero-3-phospho-(1'-sn-glycerol) = an S-1,2-diacyl-sn-glyceryl-L-cysteinyl-[prolipoprotein] + sn-glycerol 1-phosphate + H(+). Its pathway is protein modification; lipoprotein biosynthesis (diacylglyceryl transfer). Functionally, catalyzes the transfer of the diacylglyceryl group from phosphatidylglycerol to the sulfhydryl group of the N-terminal cysteine of a prolipoprotein, the first step in the formation of mature lipoproteins. The chain is Phosphatidylglycerol--prolipoprotein diacylglyceryl transferase from Prochlorococcus marinus (strain MIT 9215).